The sequence spans 399 residues: MAREKFERNKPHVNIGTIGHVDHGKTTLTAAITNVLAKKGQAQAQDYGDIDGAPEERERGITINTAHVEYETEGRHYAHVDCPGHADYVKNMITGAAQMDGAILVCAATDGPMAQTKEHILLAKQVGVPALVVALNKCDMVDDEEIIELVEMEIRELLDSYDFPGDDIPIVQVSGLKALEGDSTWESKIEELMKAVDASIPEPEREVDKPFLMAVEDVFSITGRGTVATGRIERGKVKVGEEVEIVGIRDTRLTTVTGVEMFRKLLDEGMAGDNVGLLLRGVQKEDIERGMVLVKKGSITPHTQFEGEVYVLKKEEGGRHTPFFAGYRPQFYIRTTDVTGQITAFTSDDGSNVEMVMPGDRIKMTGELICPVAIEQGMRFAIREGGRTIGAGVVSKIIK.

Positions 10-204 (KPHVNIGTIG…AVDASIPEPE (195 aa)) constitute a tr-type G domain. A G1 region spans residues 19–26 (GHVDHGKT). 19-26 (GHVDHGKT) lines the GTP pocket. Residue T26 participates in Mg(2+) binding. The tract at residues 60–64 (GITIN) is G2. Residues 81-84 (DCPG) are G3. Residues 81 to 85 (DCPGH) and 136 to 139 (NKCD) contribute to the GTP site. The segment at 136-139 (NKCD) is G4. The tract at residues 174 to 176 (SGL) is G5.

The protein belongs to the TRAFAC class translation factor GTPase superfamily. Classic translation factor GTPase family. EF-Tu/EF-1A subfamily. As to quaternary structure, monomer.

The protein localises to the cytoplasm. The enzyme catalyses GTP + H2O = GDP + phosphate + H(+). GTP hydrolase that promotes the GTP-dependent binding of aminoacyl-tRNA to the A-site of ribosomes during protein biosynthesis. The chain is Elongation factor Tu from Prochlorococcus marinus (strain MIT 9215).